Consider the following 343-residue polypeptide: Envelope glycoprotein K (343 aa).

The N-terminal stretch at 1 to 31 (MLLGGRTAYLSVLGLITAYAAFTIWYTLTAQ) is a signal peptide. The Extracellular segment spans residues 32–118 (LHNPCVYATV…VVGTRNCRAY (87 aa)). N-linked (GlcNAc...) asparagine; by host glycosylation is found at N57 and N89. Residues 119–139 (LWSVQLQMITGAWLIYIAFLC) form a helical membrane-spanning segment. The Cytoplasmic segment spans residues 140 to 213 (LRQERRLLGP…DPIGFLCEHS (74 aa)). Residues 214-234 (AALALIGLEVGTHFVARLLVV) traverse the membrane as a helical segment. Topologically, residues 235-251 (GTVTLVHTPCSQIYPIY) are extracellular. The chain crosses the membrane as a helical span at residues 252–272 (LKLASWGFVVAVTIVEIVAII). The Cytoplasmic portion of the chain corresponds to 273–303 (YEKPPKTGSSANPPTPATHGVKGLCTSCCST). Residues 304-324 (VLANLCGKLVYLLLVIGAVSI) traverse the membrane as a helical segment. Residues 325-343 (LLHYEQRIQIGLLGESFSS) lie on the Extracellular side of the membrane.

The protein belongs to the alphaherpesvirinae glycoprotein K family. In terms of assembly, interacts (via UL20 interaction region) with protein UL20 homolog (via N-terminus); this interaction probably plays a role in the coordinate transport of protein UL20 homolog and gK to the trans-Golgi network (TGN), and is required for the cell surface expression of gK. In terms of processing, N-glycosylated.

The protein localises to the host cell membrane. The protein resides in the host endosome membrane. It is found in the host Golgi apparatus membrane. Functionally, glycoprotein that probably modulates membrane fusion events during secondary envelopment of cytoplasmic capsids that bud into specific trans-Golgi network (TGN)-derived membranes. The chain is Envelope glycoprotein K (gK) from Equine herpesvirus 1 (strain Ab4p) (EHV-1).